We begin with the raw amino-acid sequence, 429 residues long: UDP-N-acetylglucosamine 1-carboxyvinyltransferase (429 aa).

Lys22 to Asn23 is a binding site for phosphoenolpyruvate. Position 102 (Arg102) interacts with UDP-N-acetyl-alpha-D-glucosamine. Cys126 acts as the Proton donor in catalysis. Cys126 bears the 2-(S-cysteinyl)pyruvic acid O-phosphothioketal mark. UDP-N-acetyl-alpha-D-glucosamine contacts are provided by residues Arg131 to Leu135, Asp316, and Ile338.

The protein belongs to the EPSP synthase family. MurA subfamily.

The protein localises to the cytoplasm. The enzyme catalyses phosphoenolpyruvate + UDP-N-acetyl-alpha-D-glucosamine = UDP-N-acetyl-3-O-(1-carboxyvinyl)-alpha-D-glucosamine + phosphate. It functions in the pathway cell wall biogenesis; peptidoglycan biosynthesis. Cell wall formation. Adds enolpyruvyl to UDP-N-acetylglucosamine. In Methylorubrum extorquens (strain CM4 / NCIMB 13688) (Methylobacterium extorquens), this protein is UDP-N-acetylglucosamine 1-carboxyvinyltransferase.